An 85-amino-acid chain; its full sequence is U4-theraphotoxin-Hhn1a (85 aa).

The N-terminal stretch at Met1–Ala22 is a signal peptide. Positions Glu23 to Arg48 are excised as a propeptide. 3 disulfides stabilise this stretch: Cys52–Cys66, Cys56–Cys77, and Cys71–Cys82.

This sequence belongs to the neurotoxin 12 (Hwtx-2) family. 02 (Hwtx-2) subfamily. In terms of assembly, monomer. In terms of tissue distribution, expressed by the venom gland.

Its subcellular location is the secreted. Functionally, neurotoxin active on both insects and mammals. This Cyriopagopus hainanus (Chinese bird spider) protein is U4-theraphotoxin-Hhn1a.